A 461-amino-acid polypeptide reads, in one-letter code: Aspartyl/glutamyl-tRNA(Asn/Gln) amidotransferase subunit B (461 aa).

Belongs to the GatB/GatE family. GatB subfamily. In terms of assembly, heterotrimer of A, B and C subunits.

The catalysed reaction is L-glutamyl-tRNA(Gln) + L-glutamine + ATP + H2O = L-glutaminyl-tRNA(Gln) + L-glutamate + ADP + phosphate + H(+). It catalyses the reaction L-aspartyl-tRNA(Asn) + L-glutamine + ATP + H2O = L-asparaginyl-tRNA(Asn) + L-glutamate + ADP + phosphate + 2 H(+). Functionally, allows the formation of correctly charged Asn-tRNA(Asn) or Gln-tRNA(Gln) through the transamidation of misacylated Asp-tRNA(Asn) or Glu-tRNA(Gln) in organisms which lack either or both of asparaginyl-tRNA or glutaminyl-tRNA synthetases. The reaction takes place in the presence of glutamine and ATP through an activated phospho-Asp-tRNA(Asn) or phospho-Glu-tRNA(Gln). The protein is Aspartyl/glutamyl-tRNA(Asn/Gln) amidotransferase subunit B of Methanopyrus kandleri (strain AV19 / DSM 6324 / JCM 9639 / NBRC 100938).